Reading from the N-terminus, the 76-residue chain is Kappa-actitoxin-Avd4a (76 aa).

Residues 1 to 19 (MNKALFLCLVVLCAAVVFA) form the signal peptide. Positions 20 to 31 (AEDLQKAKHAPF) are excised as a propeptide. 3 disulfides stabilise this stretch: Cys37/Cys72, Cys39/Cys65, and Cys55/Cys73.

This sequence belongs to the sea anemone type 3 (BDS) potassium channel toxin family. Highly expressed in the ectodermal tissue from the distal and proximal tentacles, body wall, and oral disk.

The protein localises to the secreted. It localises to the nematocyst. Acts as a gating modifier on both Kv and Nav ion channels, and also acts on blood pressure. Voltage-dependently inhibits voltage-gated potassium channels Kv3 (Kv3.1/KCNC1, Kv3.2/KCNC2 and Kv3.4/KCNC4) and slows inactivation of the voltage-gated sodium channel Nav1.7/SCN9A. Inhibits all Kv3.1, Kv3.2 and Kv3.4 by about 50% when tested at a voltage of +40 mV (45%, 48% and 56%, respectively). May act by binding residues in voltage-sensing domains S3b and S4 of Kv3. On sodium channels, tests have been done on human Nav1.7/SCN9A (expressed in HEK293 cells) (EC(50)=3 nM) and rat SCG neurons that mostly carry Nav1.7 channels (EC(50)=300 nM). This toxin also reduces blood pressure. In Anemonia viridis (Snakelocks anemone), this protein is Kappa-actitoxin-Avd4a.